A 397-amino-acid polypeptide reads, in one-letter code: Protein WRKY1 (397 aa).

Positions 326–392 (KVADIPADEF…YEGDHNHNRV (67 aa)) form a DNA-binding region, WRKY.

It belongs to the WRKY group II-d family. In terms of assembly, interacts with RS2. In terms of tissue distribution, more abundant in apices and young leaf primordia than in fully expanded leaf tissues.

The protein resides in the nucleus. Its function is as follows. Transcription factor. Interacts specifically with the W box (5'-(T)TGAC[CT]-3'), a frequently occurring elicitor-responsive cis-acting element. This Zea mays (Maize) protein is Protein WRKY1.